We begin with the raw amino-acid sequence, 209 residues long: ATP-dependent Clp protease proteolytic subunit 2 (209 aa).

Ser-106 functions as the Nucleophile in the catalytic mechanism. His-131 is an active-site residue.

Belongs to the peptidase S14 family. In terms of assembly, fourteen ClpP subunits assemble into 2 heptameric rings which stack back to back to give a disk-like structure with a central cavity, resembling the structure of eukaryotic proteasomes.

The protein resides in the cytoplasm. The catalysed reaction is Hydrolysis of proteins to small peptides in the presence of ATP and magnesium. alpha-casein is the usual test substrate. In the absence of ATP, only oligopeptides shorter than five residues are hydrolyzed (such as succinyl-Leu-Tyr-|-NHMec, and Leu-Tyr-Leu-|-Tyr-Trp, in which cleavage of the -Tyr-|-Leu- and -Tyr-|-Trp bonds also occurs).. Cleaves peptides in various proteins in a process that requires ATP hydrolysis. Has a chymotrypsin-like activity. Plays a major role in the degradation of misfolded proteins. This is ATP-dependent Clp protease proteolytic subunit 2 from Rhizobium etli (strain ATCC 51251 / DSM 11541 / JCM 21823 / NBRC 15573 / CFN 42).